The primary structure comprises 237 residues: MARKPTPPGTQQPTSVGHILDLVRGAVPPLHPAGLPFVLAPLGVAVLGRKRKWVRRGALTSAAACAAFFRHPHRVPPNRVGVVVAPADGEVALVDSAVPPAELDMGTEPLPRVSIFLSVLDVHVQRSPVGGEVTKVVHRPGQFLSADLADASEVNERNSMLLHTPEGHDVAVVQIAGLLARRIVCDAKVGDTLPIGDTYGLIRFGSRVDTYFPAGTTLLAERGQRTIGAETVIAQLP.

S206 acts as the Schiff-base intermediate with substrate; via pyruvic acid in catalysis. S206 bears the Pyruvic acid (Ser); by autocatalysis mark.

This sequence belongs to the phosphatidylserine decarboxylase family. PSD-A subfamily. Heterodimer of a large membrane-associated beta subunit and a small pyruvoyl-containing alpha subunit. Pyruvate serves as cofactor. Post-translationally, is synthesized initially as an inactive proenzyme. Formation of the active enzyme involves a self-maturation process in which the active site pyruvoyl group is generated from an internal serine residue via an autocatalytic post-translational modification. Two non-identical subunits are generated from the proenzyme in this reaction, and the pyruvate is formed at the N-terminus of the alpha chain, which is derived from the carboxyl end of the proenzyme. The post-translation cleavage follows an unusual pathway, termed non-hydrolytic serinolysis, in which the side chain hydroxyl group of the serine supplies its oxygen atom to form the C-terminus of the beta chain, while the remainder of the serine residue undergoes an oxidative deamination to produce ammonia and the pyruvoyl prosthetic group on the alpha chain.

Its subcellular location is the cell membrane. It carries out the reaction a 1,2-diacyl-sn-glycero-3-phospho-L-serine + H(+) = a 1,2-diacyl-sn-glycero-3-phosphoethanolamine + CO2. The protein operates within phospholipid metabolism; phosphatidylethanolamine biosynthesis; phosphatidylethanolamine from CDP-diacylglycerol: step 2/2. Functionally, catalyzes the formation of phosphatidylethanolamine (PtdEtn) from phosphatidylserine (PtdSer). The chain is Phosphatidylserine decarboxylase proenzyme from Rhodococcus jostii (strain RHA1).